Here is a 608-residue protein sequence, read N- to C-terminus: Myosin light chain kinase 2, skeletal/cardiac muscle (608 aa).

Residues 1 to 160 are disordered; it reads MATENGAVEL…RGSPAFLHSP (160 aa). Alanine 2 carries the N-acetylalanine modification. Composition is skewed to basic and acidic residues over residues 31-43 and 50-63; these read AAEK…DPEK and TKQD…KKDA. Residues 82 to 91 are compositionally biased toward gly residues; it reads GSQGPAGEGG. The segment covering 116–127 has biased composition (basic and acidic residues); sequence ASEKKPEAEKGP. 3 positions are modified to phosphoserine: serine 153, serine 159, and serine 161. Residues 214–235 are disordered; that stretch reads QKEAGEKAPGQADQAKVQGDTS. A Protein kinase domain is found at 297 to 552; that stretch reads MNSKEALGGG…AAQCLAHPWL (256 aa). ATP-binding positions include 303 to 311 and lysine 326; that span reads LGGGKFGAV. The active-site Proton acceptor is aspartate 418. Threonine 457 is subject to Phosphothreonine. The calmodulin-binding stretch occupies residues 586–598; the sequence is IAVSAANRFKKIS.

The protein belongs to the protein kinase superfamily. CAMK Ser/Thr protein kinase family. As to quaternary structure, may interact with centrin.

Its subcellular location is the cytoplasm. The enzyme catalyses L-seryl-[myosin light chain] + ATP = O-phospho-L-seryl-[myosin light chain] + ADP + H(+). It carries out the reaction L-threonyl-[myosin light chain] + ATP = O-phospho-L-threonyl-[myosin light chain] + ADP + H(+). In terms of biological role, implicated in the level of global muscle contraction and cardiac function. Phosphorylates a specific serine in the N-terminus of a myosin light chain. The chain is Myosin light chain kinase 2, skeletal/cardiac muscle (MYLK2) from Oryctolagus cuniculus (Rabbit).